A 611-amino-acid polypeptide reads, in one-letter code: Chaperone protein DnaK (611 aa).

Phosphothreonine; by autocatalysis is present on Thr-173. Over residues 579–592 the composition is skewed to low complexity; that stretch reads AAGQAEGAQGAQDA. Residues 579–611 are disordered; it reads AAGQAEGAQGAQDAGAKKDNVVDAEFEEVKEDK. Residues 600–611 show a composition bias toward acidic residues; the sequence is VDAEFEEVKEDK.

The protein belongs to the heat shock protein 70 family.

Functionally, acts as a chaperone. The chain is Chaperone protein DnaK from Bacillus mycoides (strain KBAB4) (Bacillus weihenstephanensis).